Reading from the N-terminus, the 523-residue chain is UPF0329 protein ECU02_0050 (523 aa).

Residues 326-386 form a disordered region; it reads EEKAKSKKRG…KTGKKSEGGR (61 aa). Residues 330–339 are compositionally biased toward basic residues; it reads KSKKRGKRKS. The span at 344-353 shows a compositional bias: basic and acidic residues; the sequence is EAKEEEKKES. Acidic residues predominate over residues 354-368; that stretch reads ETEEVEAGEEVEMPS.

It belongs to the UPF0329 family.

This is UPF0329 protein ECU02_0050 from Encephalitozoon cuniculi (strain GB-M1) (Microsporidian parasite).